The primary structure comprises 93 residues: Small ribosomal subunit protein uS15 (93 aa).

This sequence belongs to the universal ribosomal protein uS15 family. Part of the 30S ribosomal subunit. Forms a bridge to the 50S subunit in the 70S ribosome, contacting the 23S rRNA.

One of the primary rRNA binding proteins, it binds directly to 16S rRNA where it helps nucleate assembly of the platform of the 30S subunit by binding and bridging several RNA helices of the 16S rRNA. In terms of biological role, forms an intersubunit bridge (bridge B4) with the 23S rRNA of the 50S subunit in the ribosome. The polypeptide is Small ribosomal subunit protein uS15 (Ehrlichia ruminantium (strain Gardel)).